We begin with the raw amino-acid sequence, 169 residues long: Histone H1.9 (169 aa).

Polar residues-rich tracts occupy residues 1–10 and 19–36; these read MSLVSPSPDS and DAST…IGPN. Positions 1–36 are disordered; it reads MSLVSPSPDSNAVMAGDQDASTSQVPSQSESKIGPN. The 74-residue stretch at 43–116 folds into the H15 domain; it reads RKPTMSKVIL…GASGSFRLGK (74 aa). Residues Ser62 and Ser65 each carry the phosphoserine modification. A compositionally biased stretch (basic residues) spans 118-142; that stretch reads QAFKSKCKAKRRQRRQKPGQRRTGS. The disordered stretch occupies residues 118–154; the sequence is QAFKSKCKAKRRQRRQKPGQRRTGSRRSLLGSKKSNN.

The protein belongs to the histone H1/H5 family.

It localises to the nucleus. The protein localises to the chromosome. Its function is as follows. DNA-binding protein that may be implicated in chromatin remodeling and/or transcriptional regulation during spermiogenesis, the process of spermatid maturation into spermatozoa. This is Histone H1.9 from Rattus norvegicus (Rat).